The chain runs to 495 residues: MNKSRWQSRRRHGRRSHQQNPWFRLRDSEDRSDSRAAQPAHDSGHGDDESPSTSSGTAGTSSVPELPGFYFDPEKKRYFRLLPGHNNCNPLTKESIRQKEMESKRLRLLQEEDRRKKIARMGFNASSMLRKSQLGFLNVTNYCHLAHELRLSCMERKKVQIRSMDPSALASDRFNLILADTNSDRLFTVNDVKVGGSKYGIINLQSLKTPTLKVFMHENLYFTNRKVNSVCWASLNHLDSHILLCLMGLAETPGCATLLPASLFVNSHPGIDRPGMLCSFRIPGAWSCAWSLNIQANNCFSTGLSRRVLLTNVVTGHRQSFGTNSDVLAQQFALMAPLLFNGCRSGEIFAIDLRCGNQGKGWKATRLFHDSAVTSVRILQDEQYLMASDMAGKIKLWDLRTTKCVRQYEGHVNEYAYLPLHVHEEEGILVAVGQDCYTRIWSLHDARLLRTIPSPYPASKADIPSVAFSSRLGGSRGAPGLLMAVGQDLYCYSYS.

The span at M1–H17 shows a compositional bias: basic residues. Residues M1–L66 form a disordered region. Residues R24–S34 show a composition bias toward basic and acidic residues. Low complexity predominate over residues P51–S62. WD repeat units follow at residues F368–Q407 and G410–T451.

In terms of assembly, interacts with DDB1 and CUL4A.

It participates in protein modification; protein ubiquitination. Its function is as follows. May function as a substrate receptor for CUL4-DDB1 E3 ubiquitin-protein ligase complex. The chain is DDB1- and CUL4-associated factor 4 (DCAF4) from Homo sapiens (Human).